Here is a 116-residue protein sequence, read N- to C-terminus: Somatostatin (116 aa).

The N-terminal stretch at 1 to 24 is a signal peptide; that stretch reads MLSCRLQCALAALSIVLALGCVTG. Residues 25–88 constitute a propeptide that is removed on maturation; the sequence is APSDPRLRQF…QDEMRLELQR (64 aa). Position 43 is an alanine amide (Ala43). The disordered stretch occupies residues 62–82; it reads QTENDALEPEDLSQAAEQDEM. A disulfide bridge links Cys105 with Cys116.

This sequence belongs to the somatostatin family. Post-translationally, C-terminal amidation of the neuronostatin peptide is required for its biological activity, including for the regulation of mean arterial pressure.

The protein localises to the secreted. Its function is as follows. Inhibits the secretion of pituitary hormones, including that of growth hormone/somatotropin (GH1), PRL, ACTH, luteinizing hormone (LH) and TSH. Also impairs ghrelin- and GnRH-stimulated secretion of GH1 and LH; the inhibition of ghrelin-stimulated secretion of GH1 can be further increased by neuronostatin. Functionally, may enhance low-glucose-induced glucagon release by pancreatic alpha cells. This effect may be mediated by binding to GPR107 and PKA activation. May regulate cardiac contractile function. May compromise cardiomyocyte viability. In the central nervous system, may impair memory retention and may affect hippocampal excitability. May also have anxiolytic and anorexigenic effects. May play a role in arterial pressure regulation. May inhibit basal, but not ghrelin- or GnRH-stimulated secretion of GH1 or LH, but does not affect the release of other pituitary hormones, including PRL, ACTH, FSH or TSH. Potentiates inhibitory action of somatostatin on ghrelin-stimulated secretion of GH1, but not that on GnRH-stimulated secretion of LH. The chain is Somatostatin (SST) from Homo sapiens (Human).